The chain runs to 58 residues: Histatherin (58 aa).

The first 19 residues, 1 to 19 (MKIFIFIFIMALILAMIRA), serve as a signal peptide directing secretion.

This sequence belongs to the histatin/statherin family. As to expression, expressed in mammary glands.

The protein resides in the secreted. The polypeptide is Histatherin (Bos taurus (Bovine)).